Here is a 155-residue protein sequence, read N- to C-terminus: Cathelicidin-1 (155 aa).

The signal sequence occupies residues 1–29; sequence METPRASLSLGRWSLWLLLLGLALPSASA. At Gln30 the chain carries Pyrrolidone carboxylic acid. A propeptide spanning residues 30–143 is cleaved from the precursor; it reads QALSYREAVL…KQPWAPPQAA (114 aa). Disulfide bonds link Cys85–Cys96, Cys107–Cys124, and Cys146–Cys154.

Belongs to the cathelicidin family. As to expression, large granules of neutrophils.

It is found in the secreted. In terms of biological role, potent microbicidal activity; active against S.aureus and E.coli. This Bos taurus (Bovine) protein is Cathelicidin-1 (CATHL1).